The following is a 981-amino-acid chain: Peroxisomal ATPase PEX6 (981 aa).

An Omega-N-methylarginine modification is found at R119. ATP is bound by residues G471–T478 and G745–T752.

Belongs to the AAA ATPase family. As to quaternary structure, interacts with PEX1; forming the PEX1-PEX6 AAA ATPase complex, which is composed of a heterohexamer formed by a trimer of PEX1-PEX6 dimers. Interacts with PEX26; interaction is direct and promotes recruitment to peroxisomal membranes. Interacts with ZFAND6. In terms of tissue distribution, in the teeth, expressed in ameloblasts and odontoblasts. Expressed in the retina, at higher levels in the ganglion cell layer and photoreceptor layer at the joint between the outer and inner segments.

It localises to the cytoplasm. The protein localises to the cytosol. It is found in the peroxisome membrane. Its subcellular location is the cell projection. The protein resides in the cilium. It localises to the photoreceptor outer segment. It catalyses the reaction ATP + H2O = ADP + phosphate + H(+). Functionally, component of the PEX1-PEX6 AAA ATPase complex, a protein dislocase complex that mediates the ATP-dependent extraction of the PEX5 receptor from peroxisomal membranes, an essential step for PEX5 recycling. Specifically recognizes PEX5 monoubiquitinated at 'Cys-11', and pulls it out of the peroxisome lumen through the PEX2-PEX10-PEX12 retrotranslocation channel. Extraction by the PEX1-PEX6 AAA ATPase complex is accompanied by unfolding of the TPR repeats and release of bound cargo from PEX5. This chain is Peroxisomal ATPase PEX6, found in Mus musculus (Mouse).